Here is a 560-residue protein sequence, read N- to C-terminus: Involucrin (560 aa).

Residues 1–15 (MSQQHTLPVTLSPAL) are compositionally biased toward polar residues. 3 disordered regions span residues 1–131 (MSQQ…KLLD), 150–359 (EQLL…LVQQ), and 404–534 (GQLK…QSAL). Low complexity predominate over residues 76 to 91 (EQQQQEPQEQELQQQH). Basic and acidic residues-rich tracts occupy residues 92 to 115 (WEQHEEYQKAENPEQQLKQEKAQR) and 159 to 172 (QEGHLKHLEQREGQ). Positions 189-211 (QKGQLELPEQQEGQLELPEQQEG) are enriched in low complexity. Basic and acidic residues-rich tracts occupy residues 212–231 (QLKHLEQQEGQLKHLEHQEG), 252–264 (QLKHLDQQEKQPE), and 274–320 (KHLE…EHQE). Residues 321-334 (GQLGLPEQQVQQLK) are compositionally biased toward low complexity. Composition is skewed to basic and acidic residues over residues 335–353 (QLEKEEGQPKHLEEEEGQL), 404–420 (GQLKHLEEQEGQLKHLE), 454–463 (QLKHLEKQEA), 476–486 (KHLEQQEKQLE), and 494–510 (QLKHLEQQEGQLKDLEQ).

This sequence belongs to the involucrin family. Directly or indirectly cross-linked to cornifelin (CNFN). In terms of processing, substrate of transglutaminase. Specific glutamines or lysines are cross-linked to keratins, desmoplakin and to inter involucrin molecules. Keratinocytes of epidermis and other stratified squamous epithelia.

Its subcellular location is the cytoplasm. Part of the insoluble cornified cell envelope (CE) of stratified squamous epithelia. In Pan paniscus (Pygmy chimpanzee), this protein is Involucrin (IVL).